The chain runs to 363 residues: tRNA-specific 2-thiouridylase MnmA (363 aa).

ATP contacts are provided by residues 6 to 13 and L32; that span reads AMSGGVDS. The active-site Nucleophile is the C101. A disulfide bridge links C101 with C193. Position 125 (G125) interacts with ATP. The interaction with tRNA stretch occupies residues 143–145; sequence KDQ. Catalysis depends on C193, which acts as the Cysteine persulfide intermediate.

It belongs to the MnmA/TRMU family.

It localises to the cytoplasm. The enzyme catalyses S-sulfanyl-L-cysteinyl-[protein] + uridine(34) in tRNA + AH2 + ATP = 2-thiouridine(34) in tRNA + L-cysteinyl-[protein] + A + AMP + diphosphate + H(+). Catalyzes the 2-thiolation of uridine at the wobble position (U34) of tRNA, leading to the formation of s(2)U34. This Mycobacterium marinum (strain ATCC BAA-535 / M) protein is tRNA-specific 2-thiouridylase MnmA.